The primary structure comprises 684 residues: Probable metal-nicotianamine transporter YSL9 (684 aa).

Positions 1-10 (MKQERRRKRQ) are enriched in basic residues. The tract at residues 1-55 (MKQERRRKRQPGPPRLELVVAHPREEEMAGLDGGGDAEEGATHARGGGGAPPPWR) is disordered. Transmembrane regions (helical) follow at residues 58-78 (LTARGLVASLAVGAMYSVIVM), 82-102 (LTTGLVPTLNVSAALIAFVVL), 130-150 (CAVACYSIAVGGGFGSYLLGL), 174-194 (GIAWMTGFLLAVSFVGLLALV), 234-254 (VNGFTKYFAMSFFWSFFQWFY), 295-315 (LVNLSLLLGAILSWGVMWPLI), 341-361 (FICVALILGDGLYNFVKIVAL), 402-422 (LAFSGYLGLTFIAVIAIPMMF), 430-450 (VVIAYLLAPALGFCNAYGAGL), 462-482 (IALFILAAWAGKDSGVVAGLV), 515-535 (IIAQAIGTVMGCVISPLTFFL), 568-588 (FSALPQHCLQLCYGFFGFAVA), 612-632 (VPFLVGASFAIDMCIGSLIVF), and 642-662 (AALMVPAVASGLICGDGLWIF).

Belongs to the YSL (TC 2.A.67.2) family.

It is found in the membrane. May be involved in the transport of nicotianamine-chelated metals. The polypeptide is Probable metal-nicotianamine transporter YSL9 (YSL9) (Oryza sativa subsp. japonica (Rice)).